A 143-amino-acid chain; its full sequence is Snake venom vascular endothelial growth factor toxin (143 aa).

The first 24 residues, 1 to 24 (MAVYLLAVAILFCIQGWPSGTVQG), serve as a signal peptide directing secretion. Glu25 is modified (pyrrolidone carboxylic acid (Glu)). 3 disulfides stabilise this stretch: Cys38–Cys80, Cys69–Cys115, and Cys73–Cys117. Positions 117-143 (CRPRSPGDVNDGRNPKEGEPRARFPFV) are disordered.

The protein belongs to the PDGF/VEGF growth factor family. Snake venom VEGF subfamily. In terms of assembly, homodimer; disulfide-linked. Interacts with VEGF receptor-1 (FLT1) with a high affinity, whereas it binds to VEGF receptor-2 (KDR) with a low affinity. Does not bind to VEGFR-3/FLT4 and neuropilin-1 (NRP1). In terms of tissue distribution, expressed by the venom gland.

Its subcellular location is the secreted. In terms of biological role, snake venom VEGFs may contribute to venom dispersion and prey subjugation by inducing vascular permeability and hypotension. This protein activates the vascular endothelial growth factor receptor-1 (VEGFR-1/FLT1), and consequently promotes the proliferation and tissue factor production of endothelial cells, the neovascularization in the chicken chorioallantoic membrane, and increases vascular permeability. Also stimulates tissue-factor production and human monocyte chemotaxis. This Protobothrops mucrosquamatus (Taiwan habu) protein is Snake venom vascular endothelial growth factor toxin.